The primary structure comprises 636 residues: MINITTSFPNKTAAAFHKHVTGSEVASAMFPEIAESIVALFVDGNLQDLATPISKDGSVDPVTIESNTGMDIIRHDAAHIMARAVREIFPDTKLAIGPTIENGFYYDFDLSHSLSEKDFEAIERKMADIIAKDERFVREVWPRERAIKFFEDLGEHYKLEILSKVPLGEEITVYKHGEFVDLCRGPHAPSARYVKAFKLTKISGAYWLGDQKNKMLQRVYGTAWHSSEALASYIHNMQEAEKRDHRKIAKDLGWFHIQNEALGQVFWHDKGWVIYRIIEEYIRCKLKKHGYHEVKTPIMLDRKLWEKSGHWEKFKENMFVVEDDKKELAIKPMNCPCHVQIFKSKIRSYKELPIRMAEFGMCHRNEPSGSLYGLMRVRGFTQDDAHIFCTHEQVRDEVLRFYELLMEVYKDFGFDSVTVKLSDRPENRIGSDEIWDRSEQSLMEPMNALGVQYTINKGEGAFYGPKLEFTLKDSIGREWQCGTVQLDFVLPDRLGAYYIGEDGKKHIPVIIHRAILGTIERFIGILIEHYAGNIPAWLAPVQLEILTVSGEVAEYARDLAEMASQENVRVELNAAEENISHKIRKAIFNKVPIVWVVGKSEAGDRGVSVRRYGSGETCRMAAGKALKTLLTCVSMR.

Positions 1 to 63 (MINITTSFPN…SKDGSVDPVT (63 aa)) constitute a TGS domain. A catalytic region spans residues 244–535 (DHRKIAKDLG…LIEHYAGNIP (292 aa)). Residues C335, H386, and H512 each contribute to the Zn(2+) site.

It belongs to the class-II aminoacyl-tRNA synthetase family. As to quaternary structure, homodimer. Zn(2+) is required as a cofactor.

It is found in the cytoplasm. The enzyme catalyses tRNA(Thr) + L-threonine + ATP = L-threonyl-tRNA(Thr) + AMP + diphosphate + H(+). Its function is as follows. Catalyzes the attachment of threonine to tRNA(Thr) in a two-step reaction: L-threonine is first activated by ATP to form Thr-AMP and then transferred to the acceptor end of tRNA(Thr). Also edits incorrectly charged L-seryl-tRNA(Thr). This is Threonine--tRNA ligase from Anaplasma marginale (strain St. Maries).